The sequence spans 320 residues: Ferrochelatase (320 aa).

Fe cation contacts are provided by His-194 and Glu-275.

It belongs to the ferrochelatase family. In terms of assembly, monomer.

Its subcellular location is the cytoplasm. The enzyme catalyses heme b + 2 H(+) = protoporphyrin IX + Fe(2+). It functions in the pathway porphyrin-containing compound metabolism; protoheme biosynthesis; protoheme from protoporphyrin-IX: step 1/1. Its function is as follows. Catalyzes the ferrous insertion into protoporphyrin IX. This is Ferrochelatase from Salmonella typhi.